The chain runs to 103 residues: ATP synthase F(0) complex subunit g, mitochondrial (103 aa).

Alanine 2 carries the post-translational modification N-acetylalanine. N6-acetyllysine occurs at positions 11, 24, and 54.

This sequence belongs to the ATPase g subunit family. In terms of assembly, component of the ATP synthase complex composed at least of ATP5F1A/subunit alpha, ATP5F1B/subunit beta, ATP5MC1/subunit c (homooctomer), MT-ATP6/subunit a, MT-ATP8/subunit 8, ATP5ME/subunit e, ATP5MF/subunit f, ATP5MG/subunit g, ATP5MK/subunit k, ATP5MJ/subunit j, ATP5F1C/subunit gamma, ATP5F1D/subunit delta, ATP5F1E/subunit epsilon, ATP5PF/subunit F6, ATP5PB/subunit b, ATP5PD/subunit d, ATP5PO/subunit OSCP. ATP synthase complex consists of a soluble F(1) head domain (subunits alpha(3) and beta(3)) - the catalytic core - and a membrane F(0) domain - the membrane proton channel (subunits c, a, 8, e, f, g, k and j). These two domains are linked by a central stalk (subunits gamma, delta, and epsilon) rotating inside the F1 region and a stationary peripheral stalk (subunits F6, b, d, and OSCP).

It is found in the mitochondrion. The protein resides in the mitochondrion inner membrane. Functionally, subunit g, of the mitochondrial membrane ATP synthase complex (F(1)F(0) ATP synthase or Complex V) that produces ATP from ADP in the presence of a proton gradient across the membrane which is generated by electron transport complexes of the respiratory chain. ATP synthase complex consist of a soluble F(1) head domain - the catalytic core - and a membrane F(1) domain - the membrane proton channel. These two domains are linked by a central stalk rotating inside the F(1) region and a stationary peripheral stalk. During catalysis, ATP synthesis in the catalytic domain of F(1) is coupled via a rotary mechanism of the central stalk subunits to proton translocation. In vivo, can only synthesize ATP although its ATP hydrolase activity can be activated artificially in vitro. Part of the complex F(0) domain. The polypeptide is ATP synthase F(0) complex subunit g, mitochondrial (Rattus norvegicus (Rat)).